A 309-amino-acid chain; its full sequence is Ornithine carbamoyltransferase (309 aa).

Carbamoyl phosphate-binding positions include 51 to 54 (STRT), Gln-78, Arg-102, and 129 to 132 (HPVQ). Residues Asn-160, Asp-224, and 228 to 229 (SM) contribute to the L-ornithine site. Residues 264–265 (CL) and Arg-292 each bind carbamoyl phosphate.

The protein belongs to the aspartate/ornithine carbamoyltransferase superfamily. OTCase family.

Its subcellular location is the cytoplasm. It catalyses the reaction carbamoyl phosphate + L-ornithine = L-citrulline + phosphate + H(+). It functions in the pathway amino-acid biosynthesis; L-arginine biosynthesis; L-arginine from L-ornithine and carbamoyl phosphate: step 1/3. Functionally, reversibly catalyzes the transfer of the carbamoyl group from carbamoyl phosphate (CP) to the N(epsilon) atom of ornithine (ORN) to produce L-citrulline. The sequence is that of Ornithine carbamoyltransferase from Campylobacter fetus subsp. fetus (strain 82-40).